The following is a 275-amino-acid chain: Large ribosomal subunit protein uL2 (275 aa).

The tract at residues 220-275 is disordered; the sequence is VRGAAMNPRDHPHGGGEGRAPRGMPTPKTKWGKPARGVKTRHNPRTDPFIIRRRTR. Residues 227 to 239 show a composition bias toward basic and acidic residues; sequence PRDHPHGGGEGRA. The span at 249–262 shows a compositional bias: basic residues; sequence KWGKPARGVKTRHN.

The protein belongs to the universal ribosomal protein uL2 family. As to quaternary structure, part of the 50S ribosomal subunit. Forms a bridge to the 30S subunit in the 70S ribosome.

One of the primary rRNA binding proteins. Required for association of the 30S and 50S subunits to form the 70S ribosome, for tRNA binding and peptide bond formation. It has been suggested to have peptidyltransferase activity; this is somewhat controversial. Makes several contacts with the 16S rRNA in the 70S ribosome. The sequence is that of Large ribosomal subunit protein uL2 from Roseiflexus sp. (strain RS-1).